The chain runs to 360 residues: Phospho-N-acetylmuramoyl-pentapeptide-transferase (360 aa).

10 consecutive transmembrane segments (helical) span residues 26–46, 70–90, 94–114, 132–152, 168–188, 199–219, 239–259, 263–283, 288–308, and 338–358; these read AIMS…RLIA, GTPT…ALLW, SNPY…VGFV, WKYF…YMHG, VMPQ…VGTS, GLAI…AWAT, LVVL…FNTY, VFMG…IAVL, LLLV…ILQV, and VIVR…ATLK.

This sequence belongs to the glycosyltransferase 4 family. MraY subfamily. Requires Mg(2+) as cofactor.

It localises to the cell inner membrane. It carries out the reaction UDP-N-acetyl-alpha-D-muramoyl-L-alanyl-gamma-D-glutamyl-meso-2,6-diaminopimeloyl-D-alanyl-D-alanine + di-trans,octa-cis-undecaprenyl phosphate = di-trans,octa-cis-undecaprenyl diphospho-N-acetyl-alpha-D-muramoyl-L-alanyl-D-glutamyl-meso-2,6-diaminopimeloyl-D-alanyl-D-alanine + UMP. The protein operates within cell wall biogenesis; peptidoglycan biosynthesis. Its function is as follows. Catalyzes the initial step of the lipid cycle reactions in the biosynthesis of the cell wall peptidoglycan: transfers peptidoglycan precursor phospho-MurNAc-pentapeptide from UDP-MurNAc-pentapeptide onto the lipid carrier undecaprenyl phosphate, yielding undecaprenyl-pyrophosphoryl-MurNAc-pentapeptide, known as lipid I. The polypeptide is Phospho-N-acetylmuramoyl-pentapeptide-transferase (Photobacterium profundum (strain SS9)).